Consider the following 376-residue polypeptide: MVGSRTSPIFNALRVELNAREAELVEIPLIQPADPFLDMAGEDLRRRIFLTENENGDSLCLRPEFTIPVCRNHIALNAATPKRYAYLGEVFRQRRDGAAEFLQAGIEDLGAADEAASDARSLADALSCVKAIAPDAPLEIVLGDQSVFAGMLKALGLPQGWRKKLLRSFGDAHSMDLALAELTGTQRRDPLPESLAVLVAEGDEIGLARMLEAEMLEAGISPGAGRTPVEIARRLIEKEDLAATHFPAAALDLLRQFLAIRVSLDMAAVTLRAFAADNALDLGAVLQKFEARADAIAQAGIEMKDIIYDASFGRPLDYYTGLVYEIRDASNRQDGVLAGGGRYDRLLTMLGACEAIPGVGFSIWLDRLQALAGEKQ.

Belongs to the class-II aminoacyl-tRNA synthetase family. HisZ subfamily. As to quaternary structure, heteromultimer composed of HisG and HisZ subunits.

The protein resides in the cytoplasm. It functions in the pathway amino-acid biosynthesis; L-histidine biosynthesis; L-histidine from 5-phospho-alpha-D-ribose 1-diphosphate: step 1/9. Functionally, required for the first step of histidine biosynthesis. May allow the feedback regulation of ATP phosphoribosyltransferase activity by histidine. This Brucella ovis (strain ATCC 25840 / 63/290 / NCTC 10512) protein is ATP phosphoribosyltransferase regulatory subunit.